We begin with the raw amino-acid sequence, 1465 residues long: DNA polymerase alpha catalytic subunit (1465 aa).

Disordered regions lie at residues 20–39 and 105–135; these read GSFA…GRQE and LEDD…PSVT. Over residues 26–35 the composition is skewed to basic residues; the sequence is RARREKKSKK. Thr180 carries the phosphothreonine modification. 2 positions are modified to phosphoserine: Ser192 and Ser215. Lys230 bears the N6-acetyllysine mark. Residues 261–297 form a disordered region; the sequence is DESMDTEKVDEKPVTAKTWDQETEPVERVEHEADPER. Basic and acidic residues-rich tracts occupy residues 265–274 and 285–297; these read DTEKVDEKPV and PVER…DPER. The tract at residues 654 to 719 is DNA-binding; it reads RINECKVPYW…YHLSELVQQI (66 aa). At Lys974 the chain carries N6-succinyllysine. The interval 1249–1380 is DNA-binding; it reads QFRVHQYHKD…NGPLCPVCMK (132 aa). Residues Cys1287, Cys1290, Cys1314, Cys1319, Cys1352, Cys1357, Cys1375, and Cys1378 each coordinate Zn(2+). A CysA-type zinc finger spans residues 1287–1317; that stretch reads CPSCGTENIYDNVFEGSGLDMEPSLYRCSNV. The CysB motif motif lies at 1352-1378; it reads CEEPTCCSRLRRLPLHFSRNGPLCPVC.

It belongs to the DNA polymerase type-B family. As to quaternary structure, component of the alpha DNA polymerase complex (also known as the alpha DNA polymerase-primase complex) consisting of four subunits: the catalytic subunit POLA1, the regulatory subunit POLA2, and the primase complex subunits PRIM1 and PRIM2 respectively. Within the complex, POLA1 directly interacts with PRIM2. Interacts with PARP1; this interaction functions as part of the control of replication fork progression. Interacts with MCM10 and WDHD1; these interactions recruit the polymerase alpha complex to the pre-replicative complex bound to DNA. Interacts with RPA1; this interaction stabilizes the replicative complex and reduces the misincorporation rate of DNA polymerase alpha by acting as a fidelity clamp. Expressed in those zones containing proliferating cells in the developing embryonic neocortex, as well as in the lateral and medial ganglionic eminences. After birth, expressed in cells that remain proliferating in the ventricular and subventricular zone of the striatum.

Its subcellular location is the nucleus. It localises to the cytoplasm. The protein localises to the cytosol. It carries out the reaction DNA(n) + a 2'-deoxyribonucleoside 5'-triphosphate = DNA(n+1) + diphosphate. Functionally, catalytic subunit of the DNA polymerase alpha complex (also known as the alpha DNA polymerase-primase complex) which plays an essential role in the initiation of DNA synthesis. During the S phase of the cell cycle, the DNA polymerase alpha complex (composed of a catalytic subunit POLA1, a regulatory subunit POLA2 and two primase subunits PRIM1 and PRIM2) is recruited to DNA at the replicative forks via direct interactions with MCM10 and WDHD1. The primase subunit of the polymerase alpha complex initiates DNA synthesis by oligomerising short RNA primers on both leading and lagging strands. These primers are initially extended by the polymerase alpha catalytic subunit and subsequently transferred to polymerase delta and polymerase epsilon for processive synthesis on the lagging and leading strand, respectively. The reason this transfer occurs is because the polymerase alpha has limited processivity and lacks intrinsic 3' exonuclease activity for proofreading error, and therefore is not well suited for replicating long complexes. In the cytosol, responsible for a substantial proportion of the physiological concentration of cytosolic RNA:DNA hybrids, which are necessary to prevent spontaneous activation of type I interferon responses. The sequence is that of DNA polymerase alpha catalytic subunit (Pola1) from Mus musculus (Mouse).